The chain runs to 137 residues: 2-iminobutanoate/2-iminopropanoate deaminase (137 aa).

Residue Ser2 is modified to N-acetylserine. Lys13, Lys60, and Lys67 each carry N6-succinyllysine. Phosphothreonine is present on Thr74. Ser136 bears the Phosphoserine mark.

The protein belongs to the RutC family. As to quaternary structure, homotrimer. Interacts with YTHDF2. As to expression, expressed predominantly in liver and kidney. Lower levels in lung and brain.

The protein resides in the cytoplasm. Its subcellular location is the nucleus. It localises to the peroxisome. It is found in the mitochondrion. The enzyme catalyses 2-iminobutanoate + H2O = 2-oxobutanoate + NH4(+). It catalyses the reaction 2-iminopropanoate + H2O = pyruvate + NH4(+). In terms of biological role, catalyzes the hydrolytic deamination of enamine/imine intermediates that form during the course of normal metabolism. May facilitate the release of ammonia from these potentially toxic reactive metabolites, reducing their impact on cellular components. It may act on enamine/imine intermediates formed by several types of pyridoxal-5'-phosphate-dependent dehydratases including L-threonine dehydratase. Functionally, also promotes endoribonucleolytic cleavage of some transcripts by promoting recruitment of the ribonuclease P/MRP complex. Acts by bridging YTHDF2 and the ribonuclease P/MRP complex. RIDA/HRSP12 binds to N6-methyladenosine (m6A)-containing mRNAs containing a 5'-GGUUC-3' motif: cooperative binding of RIDA/HRSP12 and YTHDF2 to such transcripts lead to recruitment of the ribonuclease P/MRP complex and subsequent endoribonucleolytic cleavage. The sequence is that of 2-iminobutanoate/2-iminopropanoate deaminase from Homo sapiens (Human).